Reading from the N-terminus, the 172-residue chain is Transcriptional regulator TAC1 (172 aa).

The tract at residues 1-28 (MENIKNPKNADDCSDSISKNSHQGVDDS) is disordered. A compositionally biased stretch (polar residues) spans 15 to 28 (DSISKNSHQGVDDS). Residues 35 to 57 (YVCSFCIRGFSNAQALGGHMNIH) form a C2H2-type zinc finger. Residues 156–160 (LDLEL) carry the EAR-like (transcriptional repression) motif.

Preferentially expressed in roots and flowers. Slightly expressed in leaves and stems.

The protein localises to the nucleus. Functionally, activation factor which mediates telomerase activity and potentiates responses to auxin through the regulation of BT2. Binds in vitro to the DNA sequence 5'-GACAGTGTTAC-3' of the BT2 promoter. The sequence is that of Transcriptional regulator TAC1 (TAC1) from Arabidopsis thaliana (Mouse-ear cress).